A 103-amino-acid polypeptide reads, in one-letter code: ATP-dependent Clp protease adapter protein ClpS (103 aa).

It belongs to the ClpS family. In terms of assembly, binds to the N-terminal domain of the chaperone ClpA.

Functionally, involved in the modulation of the specificity of the ClpAP-mediated ATP-dependent protein degradation. The sequence is that of ATP-dependent Clp protease adapter protein ClpS from Nitrosomonas eutropha (strain DSM 101675 / C91 / Nm57).